The chain runs to 423 residues: Citrate synthase-like protein clz17 (423 aa).

Catalysis depends on residues H357 and D413.

This sequence belongs to the citrate synthase family.

Its pathway is secondary metabolite biosynthesis. In terms of biological role, citrate synthase-like protein; part of the gene cluster that mediates the biosynthesis of squalestatin S1 (SQS1, also known as zaragozic acid A), a heavily oxidized fungal polyketide that offers potent cholesterol lowering activity by targeting squalene synthase (SS). SQS1 is composed of a 2,8-dioxobicyclic[3.2.1]octane-3,4,5-tricarboxyclic acid core that is connected to two lipophilic polyketide arms. These initial steps feature the priming of an unusual benzoic acid starter unit onto the highly reducing polyketide synthase clz14, followed by oxaloacetate extension and product release to generate a tricarboxylic acid containing product. The phenylalanine ammonia lyase (PAL) clz10 and the acyl-CoA ligase clz12 are involved in transforming phenylalanine into benzoyl-CoA. The citrate synthase-like protein clz17 is involved in connecting the C-alpha-carbons of the hexaketide chain and oxaloacetate to afford the tricarboxylic acid unit. The potential hydrolytic enzymes, clz11 and clz13, are in close proximity to pks2 and may participate in product release. On the other side, the tetraketide arm is synthesized by a the squalestatin tetraketide synthase clz2 and enzymatically esterified to the core in the last biosynthetic step, by the acetyltransferase clz6. The biosynthesis of the tetraketide must involve 3 rounds of chain extension. After the first and second rounds methyl-transfer occurs, and in all rounds of extension the ketoreductase and dehydratase are active. The enoyl reductase and C-MeT of clz2 are not active in the final round of extension. The acetyltransferase clz6 appears to have a broad substrate selectivity for its acyl CoA substrate, allowing the in vitro synthesis of novel squalestatins. The biosynthesis of SQS1 requires several oxidative steps likely performed by oxidoreductases clz3, clz15 and clz16. Finally, in support of the identification of the cluster as being responsible for SQS1 production, the cluster contains a gene encoding a putative squalene synthase (SS) clz20, suggesting a likely mechanism for self-resistance. This Cochliobolus lunatus (Filamentous fungus) protein is Citrate synthase-like protein clz17.